The chain runs to 196 residues: DNA replication complex GINS protein PSF1 (196 aa).

The protein belongs to the GINS1/PSF1 family. As to quaternary structure, component of the GINS complex which is a heterotetramer of gins1/psf1, gins2/psf2, gins3/psf3 and gins4/sld5. Component of the CMG helicase complex, composed of the mcm2-7 complex, the GINS complex and cdc45.

The protein localises to the nucleus. The protein resides in the chromosome. Functionally, required for correct functioning of the GINS complex, a complex that plays an essential role in the initiation of DNA replication, and progression of DNA replication forks. GINS complex is a core component of CDC45-MCM-GINS (CMG) helicase, the molecular machine that unwinds template DNA during replication, and around which the replisome is built. The protein is DNA replication complex GINS protein PSF1 of Xenopus laevis (African clawed frog).